A 390-amino-acid polypeptide reads, in one-letter code: Ankyrin repeat domain-containing protein 63 (390 aa).

5 ANK repeats span residues Ala-11–Ile-40, Gln-46–Leu-79, Arg-83–Ala-112, Ala-116–Leu-145, and Ala-153–Ala-182. 2 disordered regions span residues Ala-181 to Arg-213 and Ala-226 to Ser-245. Ser-193 carries the post-translational modification Phosphoserine. A Phosphoserine modification is found at Ser-304. A disordered region spans residues Val-320–Trp-377.

The chain is Ankyrin repeat domain-containing protein 63 from Mus musculus (Mouse).